The following is a 122-amino-acid chain: Large ribosomal subunit protein uL14 (122 aa).

It belongs to the universal ribosomal protein uL14 family. As to quaternary structure, part of the 50S ribosomal subunit. Forms a cluster with proteins L3 and L19. In the 70S ribosome, L14 and L19 interact and together make contacts with the 16S rRNA in bridges B5 and B8.

In terms of biological role, binds to 23S rRNA. Forms part of two intersubunit bridges in the 70S ribosome. This is Large ribosomal subunit protein uL14 from Rhizobium etli (strain CIAT 652).